The following is an 864-amino-acid chain: Calphotin (864 aa).

The leucine-zipper stretch occupies residues 816-858 (LQTTDVSLLAIAATLDAIGEKLKDQKARNQQVMDRLCEIEKIL).

As to quaternary structure, homodimer. As to expression, soma and axons of photoreceptor cells of compound eyes and ocelli.

Its subcellular location is the cytoplasm. Its function is as follows. Plays important roles in both rhabdomere development and in photoreceptor cell survival. Might function as a calcium-sequestering 'sponge' to regulate the amount of free cytoplasmic calcium. It binds 0.3 mole of Ca(2+) per mole of protein. This chain is Calphotin (Cpn), found in Drosophila melanogaster (Fruit fly).